Reading from the N-terminus, the 165-residue chain is HTH-type transcriptional regulator IscR (165 aa).

Residues 2–131 (RLTSKGRYAV…NNITLAELVS (130 aa)) form the HTH rrf2-type domain. A DNA-binding region (H-T-H motif) is located at residues 28 to 51 (LAEISERQGISLSYLEQLFSRLRK). Positions 92, 98, and 104 each coordinate [2Fe-2S] cluster. Residues 144 to 165 (NDTRRPLTNGRPQETINVNLHA) form a disordered region. Positions 153–165 (GRPQETINVNLHA) are enriched in polar residues.

The cofactor is [2Fe-2S] cluster.

Functionally, regulates the transcription of several operons and genes involved in the biogenesis of Fe-S clusters and Fe-S-containing proteins. The sequence is that of HTH-type transcriptional regulator IscR from Sodalis glossinidius (strain morsitans).